The sequence spans 175 residues: Nucleoside diphosphate kinase 6 (175 aa).

ATP-binding residues include K15, F63, R91, T97, R111, and N121. H124 acts as the Pros-phosphohistidine intermediate in catalysis.

It belongs to the NDK family. Mg(2+) is required as a cofactor.

The enzyme catalyses a 2'-deoxyribonucleoside 5'-diphosphate + ATP = a 2'-deoxyribonucleoside 5'-triphosphate + ADP. The catalysed reaction is a ribonucleoside 5'-diphosphate + ATP = a ribonucleoside 5'-triphosphate + ADP. Its function is as follows. Major role in the synthesis of nucleoside triphosphates other than ATP. The ATP gamma phosphate is transferred to the NDP beta phosphate via a ping-pong mechanism, using a phosphorylated active-site intermediate. The chain is Nucleoside diphosphate kinase 6 (nme6) from Danio rerio (Zebrafish).